The following is a 646-amino-acid chain: MNECNVHKEGYNELNQYLTTTQSKIFQCDKYVKVFHKLLNSNRHNTKHTGKKPFKCKKCGKSFCMLLHLCQHKRIHIRENSYRCEECGKAFIWFSTLTRHRRVHTGEKSYKYECGKSFNQDSNLTTHKRIHTGQKPYKCEECGTSFYQFSYLTRHKLIHTREKPYKCEQYGKTFNQSSTLTGHKIIHNGEKPYKCEECGKAFSIFSTPTKHKIIHTEEKSHRCEEYCKAYKESSHLTTHKRIHTGEKPYKCEECGKAFSIFSTLTKHKIIHTEEKSHRCEECGKAYKESSHLTTHKRIHTGEKPYKCEECGKTFSVFSILTKHKIIHTEEKPYKCEECGKAFKRSSTLTKHRIIHTEEKPYKCEECGKAFNQSSTLSIHKIIHTGEKPYKCEECGKAFKRSSTLTIHKMIHTGEKPYKCEECGKAFNRSSHLTTHKRIHTGHKPYKCKECGKSFSVFSTLTKHKIIHTDKKPYKCEECGKAFNRSSILSIHKKIHTGEKPYKCEECGKAFKRSSHLAGHKQIHSVQKPYKCEECGKAFSIFSTLTKHKIIHTEEKPYKCEKCGKTFYRFSNLNTHKIIHTGEKPCKCEECGKAFNHSSNLIKHKLIHTGDKPYKCEACGKAFRRSSHLSRHKIIHIGIHTEETVQK.

The C2H2-type 1; degenerate zinc finger occupies 26 to 48; that stretch reads FQCDKYVKVFHKLLNSNRHNTKH. 2 C2H2-type zinc fingers span residues 54–76 and 82–104; these read FKCKKCGKSFCMLLHLCQHKRIH and YRCEECGKAFIWFSTLTRHRRVH. The C2H2-type 4; degenerate zinc finger occupies 109-131; it reads SYKYECGKSFNQDSNLTTHKRIH. The C2H2-type 5 zinc finger occupies 137–159; that stretch reads YKCEECGTSFYQFSYLTRHKLIH. A C2H2-type 6; degenerate zinc finger spans residues 165-187; that stretch reads YKCEQYGKTFNQSSTLTGHKIIH. The C2H2-type 7; degenerate zinc finger occupies 193–215; it reads YKCEECGKAFSIFSTPTKHKIIH. The segment at 221-243 adopts a C2H2-type 8; degenerate zinc-finger fold; the sequence is HRCEEYCKAYKESSHLTTHKRIH. C2H2-type zinc fingers lie at residues 249-271, 277-299, 305-327, 333-355, 361-383, 389-411, 417-439, 445-467, 473-495, 501-523, 529-551, 557-579, 585-607, and 613-635; these read YKCEECGKAFSIFSTLTKHKIIH, HRCEECGKAYKESSHLTTHKRIH, YKCEECGKTFSVFSILTKHKIIH, YKCEECGKAFKRSSTLTKHRIIH, YKCEECGKAFNQSSTLSIHKIIH, YKCEECGKAFKRSSTLTIHKMIH, YKCEECGKAFNRSSHLTTHKRIH, YKCKECGKSFSVFSTLTKHKIIH, YKCEECGKAFNRSSILSIHKKIH, YKCEECGKAFKRSSHLAGHKQIH, YKCEKCGKTFYRFSNLNTHKIIH, CKCEECGKAFNHSSNLIKHKLIH, and YKCEACGKAFRRSSHLSRHKIIH.

It localises to the nucleus. May be involved in transcriptional regulation. This is Zinc finger protein 493 (ZNF493) from Homo sapiens (Human).